The chain runs to 208 residues: Small ribosomal subunit protein uS4 (208 aa).

The S4 RNA-binding domain maps to 95 to 157 (RRIDNVVYRA…DRLKKLVRSN (63 aa)).

It belongs to the universal ribosomal protein uS4 family. As to quaternary structure, part of the 30S ribosomal subunit. Contacts protein S5. The interaction surface between S4 and S5 is involved in control of translational fidelity.

In terms of biological role, one of the primary rRNA binding proteins, it binds directly to 16S rRNA where it nucleates assembly of the body of the 30S subunit. With S5 and S12 plays an important role in translational accuracy. This Borrelia turicatae (strain 91E135) protein is Small ribosomal subunit protein uS4.